The sequence spans 54 residues: Large ribosomal subunit protein bL32 (54 aa).

Positions M1 to I54 are disordered. The segment covering R7–R16 has biased composition (basic residues). Residues A25–G34 show a composition bias toward polar residues.

The protein belongs to the bacterial ribosomal protein bL32 family.

This Tolumonas auensis (strain DSM 9187 / NBRC 110442 / TA 4) protein is Large ribosomal subunit protein bL32.